The sequence spans 108 residues: UPF0060 membrane protein Ent638_1931 (108 aa).

The next 4 membrane-spanning stretches (helical) occupy residues 6 to 26 (LLFF…WLWL), 29 to 49 (GASV…VWLL), 61 to 81 (AAYG…VDGV), and 85 to 105 (AYDW…VAGW).

Belongs to the UPF0060 family.

It localises to the cell inner membrane. This chain is UPF0060 membrane protein Ent638_1931, found in Enterobacter sp. (strain 638).